Consider the following 483-residue polypeptide: FAD-dependent oxidoreductase oblC (483 aa).

The N-terminal stretch at 1–21 (MRSVTSLVSFSACLLASSVTA) is a signal peptide. N-linked (GlcNAc...) asparagine glycans are attached at residues Asn-100, Asn-137, Asn-190, and Asn-240.

This sequence belongs to the beta-cyclopiazonate dehydrogenase family. The cofactor is FAD.

The protein operates within secondary metabolite biosynthesis; terpenoid biosynthesis. Functionally, FAD-dependent oxidoreductase; part of the gene cluster that mediates the biosynthesis of the sesterterpenes ophiobolins, fungal phytotoxins with potential anti-cancer activities. The first step of the pathway is performed by the sesterterpene synthase oblA that possesses both prenyl transferase and terpene cyclase activity, converting isopentenyl diphosphate and dimethylallyl diphosphate into geranylfarnesyl diphosphate (GFPP) and further converting GFPP into ophiobolin F, respectively. Other sesterterpenoids (C(25) terpenoids) are found as minor products of oblA. The cytochrome P450 monooxygenase oblB then catalyzes a four-step oxidative transformation of ophiobolin F to yield ophiobolin C. The FAD-dependent oxidoreductase oblC might be involved in a later oxidation step that produces ophiobolin A. The protein is FAD-dependent oxidoreductase oblC of Cochliobolus heterostrophus (strain C5 / ATCC 48332 / race O) (Southern corn leaf blight fungus).